Here is a 731-residue protein sequence, read N- to C-terminus: Gene 24 protein (731 aa).

It belongs to the herpesviridae UL87 family.

This Saimiri sciureus (Common squirrel monkey) protein is Gene 24 protein (24).